The following is a 266-amino-acid chain: Energy-coupling factor transporter transmembrane protein EcfT 1 (266 aa).

Helical transmembrane passes span I33–L53, L73–I93, L107–I127, V152–M172, and H243–L263.

The protein belongs to the energy-coupling factor EcfT family. In terms of assembly, forms a stable energy-coupling factor (ECF) transporter complex composed of 2 membrane-embedded substrate-binding proteins (S component), 2 ATP-binding proteins (A component) and 2 transmembrane proteins (T component). May be able to interact with more than 1 S component at a time.

It localises to the cell membrane. Its function is as follows. Transmembrane (T) component of an energy-coupling factor (ECF) ABC-transporter complex. Unlike classic ABC transporters this ECF transporter provides the energy necessary to transport a number of different substrates. The polypeptide is Energy-coupling factor transporter transmembrane protein EcfT 1 (Listeria monocytogenes serotype 1/2a (strain 08-5578)).